Reading from the N-terminus, the 106-residue chain is Insulin-like peptide 04 (106 aa).

The first 22 residues, 1-22 (MPRTFLVVLIYILAGFLCSTSA), serve as a signal peptide directing secretion. The propeptide occupies 23–37 (LRKVNEASGIKTDGS). Intrachain disulfides connect Cys45–Cys50, Cys46–Cys80, and Cys59–Cys68. A propeptide spans 86-106 (RRKRSLTVDKREAKKFIRQRR) (c peptide).

Belongs to the insulin family.

It is found in the secreted. Functionally, insulin decreases blood glucose concentration. May have evolved to activate insulin receptors (INSR) in vertebrates. Molecular docking studies reveals unique interaction with the human insulin receptor. In vivo, insulin-like peptide injection reduces blood glucose levels in two models of zebrafish diabetes (streptozotocin- and glucose-induced). Also shorter swimming distance of zebrafish larvae, an effect which is not observed with human insulin. The polypeptide is Insulin-like peptide 04 (Exaiptasia diaphana (Tropical sea anemone)).